The sequence spans 313 residues: Putative serine protease 29 (313 aa).

Pro residues predominate over residues 1-22 (MPTTPDPGSEPPARTPRPPPLT). The tract at residues 1–27 (MPTTPDPGSEPPARTPRPPPLTPGLSP) is disordered. The Peptidase S1 domain occupies 68–310 (IVGGHNAPPG…YVPWILQQVG (243 aa)). A disulfide bond links cysteine 99 and cysteine 115. The active-site Charge relay system is histidine 114. Asparagine 143 carries an N-linked (GlcNAc...) asparagine glycan. Catalysis depends on aspartate 161, which acts as the Charge relay system. Intrachain disulfides connect cysteine 193/cysteine 268, cysteine 226/cysteine 249, and cysteine 258/cysteine 286. Catalysis depends on serine 262, which acts as the Charge relay system.

It belongs to the peptidase S1 family.

Its subcellular location is the secreted. The chain is Putative serine protease 29 (PRSS29P) from Homo sapiens (Human).